A 319-amino-acid polypeptide reads, in one-letter code: tRNA uridine(34) hydroxylase (319 aa).

Residues 127–221 (KQEDTVIIDA…YGKDPEVQGE (95 aa)) form the Rhodanese domain. The active-site Cysteine persulfide intermediate is the Cys181.

It belongs to the TrhO family.

It catalyses the reaction uridine(34) in tRNA + AH2 + O2 = 5-hydroxyuridine(34) in tRNA + A + H2O. Catalyzes oxygen-dependent 5-hydroxyuridine (ho5U) modification at position 34 in tRNAs. The sequence is that of tRNA uridine(34) hydroxylase from Bacillus cereus (strain ZK / E33L).